The chain runs to 113 residues: PTS system fructose-like EIIB component 3 (113 aa).

Positions 1–100 constitute a PTS EIIB type-2 domain; sequence MAYLVAVTAC…PQRVMSAVRK (100 aa). Cysteine 10 functions as the Phosphocysteine intermediate in the catalytic mechanism. Cysteine 10 carries the post-translational modification Phosphocysteine; by EIIA.

It localises to the cytoplasm. It catalyses the reaction D-fructose(out) + N(pros)-phospho-L-histidyl-[protein] = D-fructose 1-phosphate(in) + L-histidyl-[protein]. The phosphoenolpyruvate-dependent sugar phosphotransferase system (sugar PTS), a major carbohydrate active transport system, catalyzes the phosphorylation of incoming sugar substrates concomitantly with their translocation across the cell membrane. The protein is PTS system fructose-like EIIB component 3 (frwD) of Escherichia coli (strain K12).